The primary structure comprises 67 residues: Large ribosomal subunit protein uL30 (67 aa).

Belongs to the universal ribosomal protein uL30 family. As to quaternary structure, part of the 50S ribosomal subunit.

The chain is Large ribosomal subunit protein uL30 from Thermotoga petrophila (strain ATCC BAA-488 / DSM 13995 / JCM 10881 / RKU-1).